We begin with the raw amino-acid sequence, 153 residues long: Fucose mutarotase (153 aa).

His-24 (proton donor) is an active-site residue. Asp-32 provides a ligand contact to substrate. Asp-69 is a catalytic residue. Substrate-binding residues include Met-78, Tyr-119, Tyr-137, and Asn-139. Tyr-119 is an active-site residue.

It belongs to the RbsD / FucU family.

The enzyme catalyses alpha-L-fucose = beta-L-fucose. Involved in the interconversion between alpha- and beta-L-fucoses. This chain is Fucose mutarotase (fuom), found in Danio rerio (Zebrafish).